The following is a 602-amino-acid chain: Protein nessun dorma (602 aa).

A coiled-coil region spans residues Ala188–Glu208.

In terms of assembly, interacts (via N-terminus) with both members of the centralspindlin complex, Pav and Tum. As to expression, detected in testis (at protein level). Also expressed in ovary.

It localises to the midbody. Functionally, required during male meiosis for completion of spermatocyte cytokinesis and possibly also required in female germline cells. Also involved in ring canal formation in male and female germline cells. Not essential for cleavage furrow ingression but is required for contractile ring stability and the attachment of the furrowing membrane to the actomyosin ring in late telophase. Displays high binding affinity for beta-galactosides. In Drosophila melanogaster (Fruit fly), this protein is Protein nessun dorma.